The sequence spans 385 residues: Putative transporter YthQ (385 aa).

A run of 8 helical transmembrane segments spans residues 24 to 44 (AVID…FVIY), 67 to 87 (WLYA…FLME), 106 to 128 (YALL…IVLP), 133 to 155 (SVLI…HIFF), 176 to 193 (TLVR…IVFT), 197 to 214 (LLAL…IRSL), 304 to 324 (AFTV…LLVY), and 365 to 385 (ILHY…LLFT).

The protein resides in the cell membrane. In Bacillus subtilis (strain 168), this protein is Putative transporter YthQ (ythQ).